Consider the following 231-residue polypeptide: 7-cyano-7-deazaguanine synthase (231 aa).

8–18 (FSGGQDSTTCL) lines the ATP pocket. Positions 188, 197, 200, and 203 each coordinate Zn(2+).

Belongs to the QueC family. It depends on Zn(2+) as a cofactor.

It carries out the reaction 7-carboxy-7-deazaguanine + NH4(+) + ATP = 7-cyano-7-deazaguanine + ADP + phosphate + H2O + H(+). It functions in the pathway purine metabolism; 7-cyano-7-deazaguanine biosynthesis. Catalyzes the ATP-dependent conversion of 7-carboxy-7-deazaguanine (CDG) to 7-cyano-7-deazaguanine (preQ(0)). The protein is 7-cyano-7-deazaguanine synthase of Salmonella schwarzengrund (strain CVM19633).